A 459-amino-acid chain; its full sequence is Interleukin-7 receptor subunit alpha (459 aa).

An N-terminal signal peptide occupies residues 1-20 (MMALGRAFAIVFCLIQAVSG). Residues 21–239 (ESGNAQDGDL…PEPKNQGGWD (219 aa)) lie on the Extracellular side of the membrane. A disulfide bridge connects residues Cys-42 and Cys-57. A glycan (N-linked (GlcNAc...) asparagine) is linked at Asn-60. 2 disulfides stabilise this stretch: Cys-74–Cys-82 and Cys-108–Cys-118. 2 N-linked (GlcNAc...) asparagine glycosylation sites follow: Asn-115 and Asn-177. Residues 131 to 232 (APSDLKVVYR…PSSTFETPEP (102 aa)) form the Fibronectin type-III domain. The short motif at 218–222 (WSEWS) is the WSXWS motif element. The helical transmembrane segment at 240–264 (PVLPSVTILSLFSVFLLVILAHVLW) threads the bilayer. Topologically, residues 265-459 (KKRIKPVVWP…VTMSSFYQNK (195 aa)) are cytoplasmic. The Box 1 motif signature appears at 272 to 280 (VWPSLPDHK). A Phosphothreonine; by PKC modification is found at Thr-282. Disordered regions lie at residues 337–365 (TQGH…RRES) and 378–413 (NAPP…NTNV). Residues 347-357 (ANRSPETSVSP) are compositionally biased toward polar residues. A compositionally biased stretch (basic and acidic residues) spans 388-397 (PDYRDGDRNR).

Belongs to the type I cytokine receptor family. Type 4 subfamily. The IL7 receptor is a heterodimer of IL7R and IL2RG. The TSLP receptor is a heterodimer of CRLF2 and IL7R. Interacts with CD53. In terms of processing, N-glycosylated IL-7Ralpha binds IL7 300-fold more tightly than the unglycosylated form. Ubiquitinated by MARCHF8; leading to lysosomal degradation. In terms of tissue distribution, spleen, thymus and fetal liver.

Its subcellular location is the membrane. Its function is as follows. Receptor for interleukin-7. Also acts as a receptor for thymic stromal lymphopoietin (TSLP). This chain is Interleukin-7 receptor subunit alpha (Il7r), found in Mus musculus (Mouse).